The sequence spans 494 residues: Sulfate adenylyltransferase subunit 1 (494 aa).

Residues 28–242 (TRPLRLITCG…TLELATVRST (215 aa)) enclose the tr-type G domain. The interval 37–44 (GSVDDGKS) is G1. 37–44 (GSVDDGKS) is a binding site for GTP. A G2 region spans residues 94 to 98 (GITID). A G3 region spans residues 115-118 (DTPG). Residues 115-119 (DTPGH) and 170-173 (NKID) contribute to the GTP site. Residues 170–173 (NKID) form a G4 region. Residues 207 to 209 (SAL) form a G5 region.

It belongs to the TRAFAC class translation factor GTPase superfamily. Classic translation factor GTPase family. CysN/NodQ subfamily. In terms of assembly, heterodimer composed of CysD, the smaller subunit, and CysN.

The catalysed reaction is sulfate + ATP + H(+) = adenosine 5'-phosphosulfate + diphosphate. It functions in the pathway sulfur metabolism; hydrogen sulfide biosynthesis; sulfite from sulfate: step 1/3. In terms of biological role, with CysD forms the ATP sulfurylase (ATPS) that catalyzes the adenylation of sulfate producing adenosine 5'-phosphosulfate (APS) and diphosphate, the first enzymatic step in sulfur assimilation pathway. APS synthesis involves the formation of a high-energy phosphoric-sulfuric acid anhydride bond driven by GTP hydrolysis by CysN coupled to ATP hydrolysis by CysD. This Agrobacterium fabrum (strain C58 / ATCC 33970) (Agrobacterium tumefaciens (strain C58)) protein is Sulfate adenylyltransferase subunit 1.